Here is a 166-residue protein sequence, read N- to C-terminus: Large ribosomal subunit protein uL10 (166 aa).

Belongs to the universal ribosomal protein uL10 family. Part of the ribosomal stalk of the 50S ribosomal subunit. The N-terminus interacts with L11 and the large rRNA to form the base of the stalk. The C-terminus forms an elongated spine to which L12 dimers bind in a sequential fashion forming a multimeric L10(L12)X complex.

Functionally, forms part of the ribosomal stalk, playing a central role in the interaction of the ribosome with GTP-bound translation factors. This chain is Large ribosomal subunit protein uL10, found in Tropheryma whipplei (strain TW08/27) (Whipple's bacillus).